The following is a 365-amino-acid chain: MFVTKIQISSFRNIAAAEIRFDRRFNVLHGANGQGKTSVLEAIYLLGTMKSFRLAKTPDLVSWNTPHALLRGWAERDGVGREIALYLGKEGRKARVDQKPVTRLADFFGNVNAVVFSPEEIAMARSGPDLRRRYLDRAIFSGDLGYLLLHHEYHRLLKQRNALLKRGSREGLDIWTGQLAEAGTRLMVKRMGYLAEIEPLVQRFYREIAGGEEEAGLAYRPHLTTPDLVSREGTDALLALFGAHEAEELRRGTTVVGPHRDDVDFVLNGRVIRTHGSQGQQRSFVLALKMAEIEYLERLNDAPPVLLLDDISSELDPQRNANLMTFLREKRMQVFITTTDVSTLRLAGIATHASFHVSRGTVTPL.

Position 30-37 (30-37 (GANGQGKT)) interacts with ATP.

This sequence belongs to the RecF family.

It localises to the cytoplasm. In terms of biological role, the RecF protein is involved in DNA metabolism; it is required for DNA replication and normal SOS inducibility. RecF binds preferentially to single-stranded, linear DNA. It also seems to bind ATP. The chain is DNA replication and repair protein RecF from Geobacter metallireducens (strain ATCC 53774 / DSM 7210 / GS-15).